The primary structure comprises 360 residues: Peptide chain release factor 1 (360 aa).

Residue Gln237 is modified to N5-methylglutamine.

The protein belongs to the prokaryotic/mitochondrial release factor family. Post-translationally, methylated by PrmC. Methylation increases the termination efficiency of RF1.

It is found in the cytoplasm. Its function is as follows. Peptide chain release factor 1 directs the termination of translation in response to the peptide chain termination codons UAG and UAA. The sequence is that of Peptide chain release factor 1 from Pseudomonas putida (strain GB-1).